Here is a 1061-residue protein sequence, read N- to C-terminus: MEPAAPDLQPVPEVTKGVPVPTPDSGCCRAAVTTVVAISVASLTLGVLSAFLSAQGVQVEHTAQLHGVRFTSLLQQENSDFYRLLTPALQTLLHFLLRALQPLSLDQEADILQKGIQARLQGQGLSLAAYGTITSVELTGRCEGPVTERDLKSGHCPGNAFSCQNSQCVSKENPECDDRVDCSDGSDEAQCDCGWQPAWRSAGRIVGGAEAAPGEFPWQVSLRENHEHFCGATIIGARWLVSAAHCFNEFQDPAQWAAQAGSVHLSGSEASAVRARVLRIAKHPAYNADTADFDVAVLELARPLPFGRYVQPACLPAATHVFPPRKKCLISGWGYLKEDFLVKPEVLQKATVELLDQNLCSSLYGHSLTDRMVCAGYLDGKVDSCQGDSGGPLVCEEPSGRFFLAGVVSWGIGCAEARRPGVYTRVTRLRDWILEVTSSADTPVVPTEAPAPITPSTPWPTSPESRVPNTTAKPTVAPTPAPLHPSTAAKPQECGARPAMDKPTRIVGGISAVSGEVPWQASLKEGSRHFCGATVVGDRWLLSAAHCFNHTKLEQVQAHLGTVSLLGVGGSPVKLGLRSVALHPRYNPGILDFDVALLELAQPLVFNKYIQPVCLPLAIHKFPVGRKCMISGWGNMQEGNATKPDILQKASVGIIEQKMCGALYNFSLTDRMLCAGFLEGRVDSCQGDSGGPLACEETPGVFYLAGIVSWGIGCAQAKKPGVYARITRLKDWILKAMSSDPSSTAHPHTSSTRLIPSQPPTTTAAGLIPEASTGRPATLRATIRVTTRPLNTTLSARSTTTRRQTPAPGTTVFSHLPDCGLAPPGALTRIVGGSAASLGEWPWQVSLWLRRREHRCGAVLVAERWLLSAAHCFDVYGDPMQWAAFLGTPFLSSTEGQLERVARIYRHPFYNIYTLDYDVALLELAGPVRRSRLVRPICLPGPTRPPEGARCVITGWGSLREGGSMARQLQKAAVRVLSEQTCRRFYPVQISSRMLCAGFPQGGVDSCSGDAGGPLACREPSGQWVLTGVTSWGYGCGRPHFPGVYTRVAAVLGWIGQNIRE.

Topologically, residues 3-31 (PAAPDLQPVPEVTKGVPVPTPDSGCCRAA) are cytoplasmic. A helical membrane pass occupies residues 32 to 52 (VTTVVAISVASLTLGVLSAFL). Topologically, residues 53–1061 (SAQGVQVEHT…LGWIGQNIRE (1009 aa)) are extracellular. An LDL-receptor class A domain is found at 155–192 (HCPGNAFSCQNSQCVSKENPECDDRVDCSDGSDEAQCD). 4 disulfide bridges follow: cysteine 156–cysteine 168, cysteine 163–cysteine 182, cysteine 176–cysteine 191, and cysteine 230–cysteine 246. The region spanning 205-438 (IVGGAEAAPG…LRDWILEVTS (234 aa)) is the Peptidase S1 1 domain. Active-site charge relay system residues include histidine 245 and aspartate 294. 3 disulfide bridges follow: cysteine 328-cysteine 395, cysteine 360-cysteine 374, and cysteine 385-cysteine 414. Serine 389 functions as the Charge relay system in the catalytic mechanism. The interval 443 to 499 (PVVPTEAPAPITPSTPWPTSPESRVPNTTAKPTVAPTPAPLHPSTAAKPQECGARPA) is disordered. The span at 452–461 (PITPSTPWPT) shows a compositional bias: pro residues. A compositionally biased stretch (low complexity) spans 462 to 476 (SPESRVPNTTAKPTV). Asparagine 469 is a glycosylation site (N-linked (GlcNAc...) asparagine). One can recognise a Peptidase S1 2 domain in the interval 506–738 (IVGGISAVSG…LKDWILKAMS (233 aa)). A disulfide bond links cysteine 531 and cysteine 547. Histidine 546 functions as the Charge relay system in the catalytic mechanism. Asparagine 549 carries an N-linked (GlcNAc...) asparagine glycan. The Charge relay system role is filled by aspartate 594. Cystine bridges form between cysteine 628-cysteine 695, cysteine 660-cysteine 674, and cysteine 685-cysteine 714. N-linked (GlcNAc...) asparagine glycosylation is found at asparagine 640 and asparagine 665. Catalysis depends on serine 689, which acts as the Charge relay system. Positions 740–752 (DPSSTAHPHTSST) are enriched in low complexity. 2 disordered regions span residues 740–771 (DPSS…IPEA) and 790–810 (LNTT…APGT). Asparagine 791 carries N-linked (GlcNAc...) asparagine glycosylation. Positions 792-808 (TTLSARSTTTRRQTPAP) are enriched in low complexity. A Peptidase S1 3 domain is found at 830 to 1060 (IVGGSAASLG…VLGWIGQNIR (231 aa)). Disulfide bonds link cysteine 856/cysteine 872, cysteine 951/cysteine 1017, cysteine 982/cysteine 996, and cysteine 1007/cysteine 1036.

The protein belongs to the peptidase S1 family. Proteolytically cleaved to generate 3 independent serine protease chains. The cleaved chains may remain attached to the membrane thanks to disulfide bonds. It is unclear whether cleavage always takes place.

The protein localises to the cell membrane. With respect to regulation, inhibited by serine protease inhibitors PMSF and 4-(2-aminoethyl)benzenesulfonyl fluoride, but not by EDTA. Functionally, serase-1 and serase-2 are serine proteases that hydrolyze the peptides N-t-Boc-Gln-Ala-Arg-AMC and N-t-Boc-Gln-Gly-Arg-AMC. In contrast, N-t-Boc-Ala-Phe-Lys-AMC and N-t-Boc-Ala-Pro-Ala-AMC are not significantly hydrolyzed. This is Transmembrane protease serine 9 (Tmprss9) from Rattus norvegicus (Rat).